We begin with the raw amino-acid sequence, 245 residues long: NAD(P)H-quinone oxidoreductase subunit K (245 aa).

[4Fe-4S] cluster-binding residues include cysteine 58, cysteine 59, cysteine 123, and cysteine 154.

This sequence belongs to the complex I 20 kDa subunit family. In terms of assembly, NDH-1 can be composed of about 15 different subunits; different subcomplexes with different compositions have been identified which probably have different functions. It depends on [4Fe-4S] cluster as a cofactor.

The protein localises to the cellular thylakoid membrane. It carries out the reaction a plastoquinone + NADH + (n+1) H(+)(in) = a plastoquinol + NAD(+) + n H(+)(out). It catalyses the reaction a plastoquinone + NADPH + (n+1) H(+)(in) = a plastoquinol + NADP(+) + n H(+)(out). Functionally, NDH-1 shuttles electrons from an unknown electron donor, via FMN and iron-sulfur (Fe-S) centers, to quinones in the respiratory and/or the photosynthetic chain. The immediate electron acceptor for the enzyme in this species is believed to be plastoquinone. Couples the redox reaction to proton translocation, and thus conserves the redox energy in a proton gradient. Cyanobacterial NDH-1 also plays a role in inorganic carbon-concentration. This Trichormus variabilis (strain ATCC 29413 / PCC 7937) (Anabaena variabilis) protein is NAD(P)H-quinone oxidoreductase subunit K.